Consider the following 229-residue polypeptide: uncharacterized protein (229 aa).

7 helical membrane-spanning segments follow: residues 1–21, 32–52, 58–78, 100–120, 139–159, 178–198, and 206–226; these read MFGT…GGIF, ILMQ…ITQH, YPIL…IINL, TAVL…EAAL, IVLA…LFSW, LINE…LSIL, and LNLL…HAFG.

It localises to the cell membrane. This is an uncharacterized protein from Bacillus subtilis (strain 168).